The sequence spans 311 residues: Large ribosomal subunit protein uL18 (311 aa).

Belongs to the universal ribosomal protein uL18 family. As to quaternary structure, component of the large ribosomal subunit (LSU).

It is found in the cytoplasm. Its subcellular location is the nucleus. Its function is as follows. Component of the ribosome, a large ribonucleoprotein complex responsible for the synthesis of proteins in the cell. The small ribosomal subunit (SSU) binds messenger RNAs (mRNAs) and translates the encoded message by selecting cognate aminoacyl-transfer RNA (tRNA) molecules. The large subunit (LSU) contains the ribosomal catalytic site termed the peptidyl transferase center (PTC), which catalyzes the formation of peptide bonds, thereby polymerizing the amino acids delivered by tRNAs into a polypeptide chain. The nascent polypeptides leave the ribosome through a tunnel in the LSU and interact with protein factors that function in enzymatic processing, targeting, and the membrane insertion of nascent chains at the exit of the ribosomal tunnel. This chain is Large ribosomal subunit protein uL18 (RPL5), found in Eimeria tenella (Coccidian parasite).